We begin with the raw amino-acid sequence, 506 residues long: Maturase K (506 aa).

The protein belongs to the intron maturase 2 family. MatK subfamily.

It is found in the plastid. The protein resides in the chloroplast. Usually encoded in the trnK tRNA gene intron. Probably assists in splicing its own and other chloroplast group II introns. This chain is Maturase K, found in Mentzelia lindleyi (Blazing star).